Here is a 938-residue protein sequence, read N- to C-terminus: Isoleucine--tRNA ligase (938 aa).

Positions 58–68 (PYANGSIHIGH) match the 'HIGH' region motif. Glu561 is a binding site for L-isoleucyl-5'-AMP. A 'KMSKS' region motif is present at residues 602–606 (KMSKS). Lys605 is a binding site for ATP. Zn(2+) is bound by residues Cys901, Cys904, Cys921, and Cys924.

It belongs to the class-I aminoacyl-tRNA synthetase family. IleS type 1 subfamily. In terms of assembly, monomer. Requires Zn(2+) as cofactor.

The protein localises to the cytoplasm. The enzyme catalyses tRNA(Ile) + L-isoleucine + ATP = L-isoleucyl-tRNA(Ile) + AMP + diphosphate. In terms of biological role, catalyzes the attachment of isoleucine to tRNA(Ile). As IleRS can inadvertently accommodate and process structurally similar amino acids such as valine, to avoid such errors it has two additional distinct tRNA(Ile)-dependent editing activities. One activity is designated as 'pretransfer' editing and involves the hydrolysis of activated Val-AMP. The other activity is designated 'posttransfer' editing and involves deacylation of mischarged Val-tRNA(Ile). This chain is Isoleucine--tRNA ligase, found in Cronobacter sakazakii (strain ATCC BAA-894) (Enterobacter sakazakii).